The chain runs to 349 residues: Protein-glutamate methylesterase/protein-glutamine glutaminase 2 (349 aa).

Residues 4-121 form the Response regulatory domain; sequence SVLVVDDSAL…AEGMQAYAEE (118 aa). Asp-55 carries the 4-aspartylphosphate modification. One can recognise a CheB-type methylesterase domain in the interval 151–343; sequence LLSTEKIIAL…AALLQQAARR (193 aa). Residues Ser-163, His-189, and Asp-285 contribute to the active site.

It belongs to the CheB family. Interacts with the C-terminal pentapeptide GWEEF of McpB. Post-translationally, phosphorylated by CheA. Phosphorylation of the N-terminal regulatory domain activates the methylesterase activity.

It localises to the cytoplasm. It catalyses the reaction [protein]-L-glutamate 5-O-methyl ester + H2O = L-glutamyl-[protein] + methanol + H(+). The enzyme catalyses L-glutaminyl-[protein] + H2O = L-glutamyl-[protein] + NH4(+). In terms of biological role, involved in chemotaxis. Part of a chemotaxis signal transduction system that modulates chemotaxis in response to various stimuli. Catalyzes the demethylation of specific methylglutamate residues introduced into the chemoreceptors (methyl-accepting chemotaxis proteins or MCP) by CheR. Also mediates the irreversible deamidation of specific glutamine residues to glutamic acid. Acts on the methyl-accepting chemotaxis protein McpB. May be involved in a specific chemotactic response, which takes place during infection and is required for P.aeruginosa pathogenicity. The protein is Protein-glutamate methylesterase/protein-glutamine glutaminase 2 of Pseudomonas aeruginosa (strain ATCC 15692 / DSM 22644 / CIP 104116 / JCM 14847 / LMG 12228 / 1C / PRS 101 / PAO1).